The primary structure comprises 986 residues: Probable serine/threonine-protein kinase DDB_G0272092 (986 aa).

In terms of domain architecture, C2 spans 1–107 (MARKIGSVRI…EYIVDTTKWY (107 aa)). Residues Asp-22, Asp-28, Asp-76, Asp-78, Ser-81, and Asp-84 each contribute to the Ca(2+) site. ANK repeat units follow at residues 137 to 167 (PEKS…DYTI), 171 to 201 (EGTP…RVSI), 205 to 238 (HGNT…GIND), 242 to 274 (LGET…IINH), 278 to 307 (TRDT…NVMI), and 312 to 344 (PSRT…WLNE). One can recognise an SAM domain in the interval 333–396 (EKVIEISDWL…LRAVRKIKDP (64 aa)). Over residues 412–438 (HVENDNNNNNNNNNNNNNSQEQCNINN) the composition is skewed to low complexity. Disordered stretches follow at residues 412 to 520 (HVEN…SNTT) and 532 to 574 (TTLT…PEGP). Polar residues predominate over residues 439–448 (DSLGSGNRNS). The segment covering 454–464 (QNQNNTLNNNN) has biased composition (low complexity). Polar residues predominate over residues 465 to 476 (VESKSTGNLNSL). Composition is skewed to low complexity over residues 493–520 (NILS…SNTT) and 546–571 (TEST…TVTP). Positions 601-870 (LTYNVLLGTG…ELLKIRDEYN (270 aa)) constitute a Protein kinase domain. ATP is bound by residues 607–615 (LGTGASGKV) and Lys-628. Asp-722 (proton acceptor) is an active-site residue. Low complexity-rich tracts occupy residues 901–913 (DSNN…NNNN) and 928–947 (SNSN…SDNN). The interval 901 to 986 (DSNNINNNNN…SPMEPKSIKK (86 aa)) is disordered. Composition is skewed to polar residues over residues 948 to 959 (ISEPATTDSITK) and 969 to 978 (LTRTRSSSSP).

The protein belongs to the protein kinase superfamily. TKL Ser/Thr protein kinase family. Requires Ca(2+) as cofactor.

It carries out the reaction L-seryl-[protein] + ATP = O-phospho-L-seryl-[protein] + ADP + H(+). The enzyme catalyses L-threonyl-[protein] + ATP = O-phospho-L-threonyl-[protein] + ADP + H(+). The chain is Probable serine/threonine-protein kinase DDB_G0272092 from Dictyostelium discoideum (Social amoeba).